Here is a 539-residue protein sequence, read N- to C-terminus: Protein ENTREP2 (539 aa).

4 helical membrane passes run 31 to 51 (IVLA…AVSF), 65 to 85 (SCPF…VVSW), 89 to 109 (LSLV…LNLA), and 176 to 196 (LLFS…LATA). A disordered region spans residues 301-481 (VVGQPPASQV…TSKERPRSLV (181 aa)). A compositionally biased stretch (polar residues) spans 306-331 (PASQVTSIGQQVAESSSGDPNTSAGF). Residues 347–365 (GTATPGSSPSPDGPVGAPA) are compositionally biased toward low complexity. Positions 395–408 (SRSTSDPTLCTSSM) are enriched in polar residues.

Belongs to the ENTREP family.

It is found in the membrane. This Homo sapiens (Human) protein is Protein ENTREP2.